A 98-amino-acid polypeptide reads, in one-letter code: NADH-ubiquinone oxidoreductase chain 4L (98 aa).

3 consecutive transmembrane segments (helical) span residues 2–22, 29–49, and 61–81; these read PSIS…MLVF, SLLC…LFIM, and ILLL…LVMV.

It belongs to the complex I subunit 4L family. As to quaternary structure, core subunit of respiratory chain NADH dehydrogenase (Complex I) which is composed of 45 different subunits.

It is found in the mitochondrion inner membrane. It catalyses the reaction a ubiquinone + NADH + 5 H(+)(in) = a ubiquinol + NAD(+) + 4 H(+)(out). Core subunit of the mitochondrial membrane respiratory chain NADH dehydrogenase (Complex I) which catalyzes electron transfer from NADH through the respiratory chain, using ubiquinone as an electron acceptor. Part of the enzyme membrane arm which is embedded in the lipid bilayer and involved in proton translocation. This is NADH-ubiquinone oxidoreductase chain 4L (MT-ND4L) from Lepilemur sahamalazensis (Sahamalaza sportive lemur).